The following is a 361-amino-acid chain: uncharacterized protein (361 aa).

Residues 1–10 (MRRYLKKAKP) show a composition bias toward basic residues. 2 disordered regions span residues 1–82 (MRRY…SSFH) and 94–147 (ALSH…VNTS). Composition is skewed to basic and acidic residues over residues 44–57 (KEKN…KYEN) and 120–134 (FTKK…ESEL). Residues 135–147 (QTRSSPPLPVNTS) are compositionally biased toward polar residues. Positions 295-349 (NILTMDEQIQRLKEAIASEKLQQEERSQIIKSLMEEELEINEQEEKIKHSFIDLD) form a coiled coil.

The protein resides in the cytoplasm. The protein localises to the nucleus. This is an uncharacterized protein from Schizosaccharomyces pombe (strain 972 / ATCC 24843) (Fission yeast).